We begin with the raw amino-acid sequence, 403 residues long: Na(+)/H(+) antiporter NhaH (403 aa).

The next 12 helical transmembrane spans lie at 7-27 (VFIQ…IAKL), 34-54 (VALV…IEEA), 99-119 (LAFL…YFLL), 125-145 (VAFT…LSIF), 168-188 (IAVV…EMGW), 196-216 (FMFL…GYVF), 228-245 (LEVA…FIAE), 250-272 (SGVI…IGMS), 282-302 (FWDS…GLEI), 311-331 (WGYI…AVYI), 345-365 (ILIN…LSLP), and 373-393 (QVLL…GLTL).

This sequence belongs to the monovalent cation:proton antiporter 1 (CPA1) transporter (TC 2.A.36) family.

The protein resides in the cell membrane. Its function is as follows. Na(+)/H(+) antiporter that extrudes sodium in exchange for external protons. Can also transport lithium. The protein is Na(+)/H(+) antiporter NhaH (nhaH) of Halobacillus aidingensis.